The sequence spans 165 residues: Lipoprotein signal peptidase (165 aa).

5 helical membrane-spanning segments follow: residues 10 to 30 (LKWL…KYWV), 42 to 62 (VLPG…GLFT), 71 to 91 (LFVW…YKLI), 105 to 125 (IGGA…VDFI), and 133 to 153 (HWPT…IVTI). Residues Asp-123 and Asp-141 contribute to the active site.

It belongs to the peptidase A8 family.

It is found in the cell inner membrane. The catalysed reaction is Release of signal peptides from bacterial membrane prolipoproteins. Hydrolyzes -Xaa-Yaa-Zaa-|-(S,diacylglyceryl)Cys-, in which Xaa is hydrophobic (preferably Leu), and Yaa (Ala or Ser) and Zaa (Gly or Ala) have small, neutral side chains.. It participates in protein modification; lipoprotein biosynthesis (signal peptide cleavage). This protein specifically catalyzes the removal of signal peptides from prolipoproteins. This Blochmanniella pennsylvanica (strain BPEN) protein is Lipoprotein signal peptidase.